Here is a 331-residue protein sequence, read N- to C-terminus: Bifunctional nuclease (331 aa).

One can recognise a BFN domain in the interval 126–261; the sequence is CVQNNPRVLR…RIAYNNGLKV (136 aa). Residues 291 to 326 form the UVR domain; that stretch reads EAQEFDLVRNMLVAAVEERYKDAAQYRDQLFMFRAK.

It belongs to the bifunctional nuclease family.

The protein resides in the nucleus. Bifunctional nuclease with both RNase and DNase activities. Involved in basal defense response. Participates in abscisic acid-derived callose deposition following infection by a necrotrophic pathogen. In Oryza minuta, this protein is Bifunctional nuclease (BBD).